The primary structure comprises 555 residues: Probable Xaa-Pro aminopeptidase BC1G_13431 (555 aa).

Residues D303, D314, E458, and E499 each coordinate Mn(2+). Residues 527–555 are disordered; sequence EGKEQEEEEEREANRKATESRKQKKTWFW. The span at 538 to 547 shows a compositional bias: basic and acidic residues; the sequence is EANRKATESR.

This sequence belongs to the peptidase M24B family. Mn(2+) is required as a cofactor.

It carries out the reaction Release of any N-terminal amino acid, including proline, that is linked to proline, even from a dipeptide or tripeptide.. Its function is as follows. Catalyzes the removal of a penultimate prolyl residue from the N-termini of peptides. This chain is Probable Xaa-Pro aminopeptidase BC1G_13431, found in Botryotinia fuckeliana (strain B05.10) (Noble rot fungus).